A 157-amino-acid polypeptide reads, in one-letter code: NADPH-dependent 7-cyano-7-deazaguanine reductase (157 aa).

The Thioimide intermediate role is filled by C55. D62 serves as the catalytic Proton donor. Substrate-binding positions include 77–79 (VES) and 96–97 (HE).

This sequence belongs to the GTP cyclohydrolase I family. QueF type 1 subfamily.

The protein localises to the cytoplasm. It carries out the reaction 7-aminomethyl-7-carbaguanine + 2 NADP(+) = 7-cyano-7-deazaguanine + 2 NADPH + 3 H(+). Its pathway is tRNA modification; tRNA-queuosine biosynthesis. Functionally, catalyzes the NADPH-dependent reduction of 7-cyano-7-deazaguanine (preQ0) to 7-aminomethyl-7-deazaguanine (preQ1). This chain is NADPH-dependent 7-cyano-7-deazaguanine reductase, found in Neisseria meningitidis serogroup A / serotype 4A (strain DSM 15465 / Z2491).